A 452-amino-acid polypeptide reads, in one-letter code: Phosphoglucosamine mutase (452 aa).

Ser-103 functions as the Phosphoserine intermediate in the catalytic mechanism. Residues Ser-103, Asp-243, Asp-245, and Asp-247 each coordinate Mg(2+). The residue at position 103 (Ser-103) is a Phosphoserine.

Belongs to the phosphohexose mutase family. Requires Mg(2+) as cofactor. Activated by phosphorylation.

It carries out the reaction alpha-D-glucosamine 1-phosphate = D-glucosamine 6-phosphate. Catalyzes the conversion of glucosamine-6-phosphate to glucosamine-1-phosphate. The protein is Phosphoglucosamine mutase of Exiguobacterium sp. (strain ATCC BAA-1283 / AT1b).